Reading from the N-terminus, the 268-residue chain is MERQPCREKFGLKRGPWTEEEDQKLTSYVLKNGIQGWRVIPKLAGLSRCGKSCRLRWMNYLRPDLKKGPLTEMEENQIIELHAHLGNRWSKIALHIPGRTDNEIKNYWNTHIKKKLKLLGIDPNNHQPFEHKGNVDETKIESDTKESNSQDMKQIVNEVSRQGNNDQITESTSPEIKDEIVTSCQSDYLMHNNDLMSNRSSNYYSPSFSMEESLSNPKSTGQTSFAVSIHEESMKQWVQSVDSKLPWDCFNQLDEQLYLSFQQNQSNS.

HTH myb-type domains are found at residues 9-61 (KFGL…MNYL) and 62-116 (RPDL…KKKL). DNA-binding regions (H-T-H motif) lie at residues 37–61 (WRVI…MNYL) and 89–112 (WSKI…NTHI).

In terms of tissue distribution, expressed in roots, stems, leaves, seed pods and flowers. Strongest expression in the stem.

It is found in the nucleus. In terms of biological role, transcription factor. The sequence is that of Myb-related protein 315 from Antirrhinum majus (Garden snapdragon).